The following is a 631-amino-acid chain: Nucleoside triphosphatase I (631 aa).

The 163-residue stretch at 42–204 (FLGLDTMHSI…TMIVNLLRPK (163 aa)) folds into the Helicase ATP-binding domain. 55–62 (HDTGVGKT) is a binding site for ATP. The DEXH box motif lies at 141 to 144 (DECH). One can recognise a Helicase C-terminal domain in the interval 367–536 (KFTEVCLKIL…LFKVFKESSI (170 aa)). The tract at residues 457–524 (DIFILDMTWN…NIIKTKSKEF (68 aa)) is binding to the cap-specific mRNA (nucleoside-2'-O-)-methyltransferase.

It belongs to the helicase family. NPH I subfamily. Monomer. Interacts (via C-terminus) with RAP94 (via N-terminus). Interacts with the cap-specific mRNA (nucleoside-2'-O-)-methyltransferase.

It localises to the virion. The enzyme catalyses a ribonucleoside 5'-triphosphate + H2O = a ribonucleoside 5'-diphosphate + phosphate + H(+). Its function is as follows. DNA-dependent ATPase required for providing the needed energy to achieve the termination of early transcripts. Acts in concert with the RAP94 subunit of the virion RNA polymerase and the capping enzyme/VTF to catalyze release of UUUUUNU-containing nascent RNA from the elongation complex. NPH-I must bind ssDNA in order to exhibit ATPase activity. The sequence is that of Nucleoside triphosphatase I (NPH1) from Erythrocebus patas (Red guenon).